The chain runs to 142 residues: Transcriptional regulator MraZ (142 aa).

SpoVT-AbrB domains are found at residues 5-47 and 76-119; these read EYPY…PLAS and ANKA…NPER.

The protein belongs to the MraZ family. In terms of assembly, forms oligomers.

The protein localises to the cytoplasm. It localises to the nucleoid. The chain is Transcriptional regulator MraZ from Deinococcus geothermalis (strain DSM 11300 / CIP 105573 / AG-3a).